The following is a 193-amino-acid chain: Large ribosomal subunit protein eL18 (193 aa).

Positions 158–193 (HFGAAGVPGSHAKPHVSSRGKERQRSSKRRHAFRHK) are disordered. Residues 183–193 (SSKRRHAFRHK) show a composition bias toward basic residues.

It belongs to the eukaryotic ribosomal protein eL18 family.

It is found in the cytoplasm. The chain is Large ribosomal subunit protein eL18 (RPL18-A) from Trypanosoma brucei brucei (strain 927/4 GUTat10.1).